Consider the following 332-residue polypeptide: Lipoyl synthase (332 aa).

[4Fe-4S] cluster is bound by residues Cys74, Cys79, Cys85, Cys100, Cys104, Cys107, and Ser314. One can recognise a Radical SAM core domain in the interval 85–303; that stretch reads CFGKGTATFM…EEEAYKMGFT (219 aa).

The protein belongs to the radical SAM superfamily. Lipoyl synthase family. It depends on [4Fe-4S] cluster as a cofactor.

Its subcellular location is the cytoplasm. It catalyses the reaction [[Fe-S] cluster scaffold protein carrying a second [4Fe-4S](2+) cluster] + N(6)-octanoyl-L-lysyl-[protein] + 2 oxidized [2Fe-2S]-[ferredoxin] + 2 S-adenosyl-L-methionine + 4 H(+) = [[Fe-S] cluster scaffold protein] + N(6)-[(R)-dihydrolipoyl]-L-lysyl-[protein] + 4 Fe(3+) + 2 hydrogen sulfide + 2 5'-deoxyadenosine + 2 L-methionine + 2 reduced [2Fe-2S]-[ferredoxin]. Its pathway is protein modification; protein lipoylation via endogenous pathway; protein N(6)-(lipoyl)lysine from octanoyl-[acyl-carrier-protein]: step 2/2. Its function is as follows. Catalyzes the radical-mediated insertion of two sulfur atoms into the C-6 and C-8 positions of the octanoyl moiety bound to the lipoyl domains of lipoate-dependent enzymes, thereby converting the octanoylated domains into lipoylated derivatives. This is Lipoyl synthase from Paracidovorax citrulli (strain AAC00-1) (Acidovorax citrulli).